The following is a 123-amino-acid chain: Large ribosomal subunit protein uL22c (123 aa).

The protein belongs to the universal ribosomal protein uL22 family. Part of the 50S ribosomal subunit.

It localises to the plastid. The protein resides in the chloroplast. Functionally, this protein binds specifically to 23S rRNA. In terms of biological role, the globular domain of the protein is located near the polypeptide exit tunnel on the outside of the subunit, while an extended beta-hairpin is found that lines the wall of the exit tunnel in the center of the 70S ribosome. The sequence is that of Large ribosomal subunit protein uL22c (rpl22) from Illicium oligandrum (Star anise).